The following is a 212-amino-acid chain: Maleylpyruvate isomerase (212 aa).

The GST N-terminal domain maps to methionine 1–alanine 80. Residues serine 9–threonine 11, histidine 38, valine 52, glutamine 64–serine 65, aspartate 102–histidine 104, asparagine 108–arginine 110, and arginine 176 contribute to the glutathione site. The region spanning aspartate 85–alanine 212 is the GST C-terminal domain.

It belongs to the GST superfamily. Zeta family. In terms of assembly, homodimer. Glutathione serves as cofactor.

It catalyses the reaction 3-maleylpyruvate = 3-fumarylpyruvate. Its pathway is aromatic compound metabolism; naphthalene degradation. In terms of biological role, catalyzes the GSH-dependent isomerization of maleylpyruvate to fumarylpyruvate which is subsequently processed by NagK to form pyruvate and fumarate. This chain is Maleylpyruvate isomerase, found in Ralstonia sp.